A 174-amino-acid chain; its full sequence is ATP synthase subunit b, organellar chromatophore (174 aa).

A helical transmembrane segment spans residues 26-46; sequence LINLIIVIGVLFTFLRGFLGE.

This sequence belongs to the ATPase B chain family. As to quaternary structure, F-type ATPases have 2 components, F(1) - the catalytic core - and F(0) - the membrane proton channel. F(1) has five subunits: alpha(3), beta(3), gamma(1), delta(1), epsilon(1). F(0) has four main subunits: a(1), b(1), b'(1) and c(10-14). The alpha and beta chains form an alternating ring which encloses part of the gamma chain. F(1) is attached to F(0) by a central stalk formed by the gamma and epsilon chains, while a peripheral stalk is formed by the delta, b and b' chains.

It is found in the plastid. Its subcellular location is the organellar chromatophore thylakoid membrane. F(1)F(0) ATP synthase produces ATP from ADP in the presence of a proton or sodium gradient. F-type ATPases consist of two structural domains, F(1) containing the extramembraneous catalytic core and F(0) containing the membrane proton channel, linked together by a central stalk and a peripheral stalk. During catalysis, ATP synthesis in the catalytic domain of F(1) is coupled via a rotary mechanism of the central stalk subunits to proton translocation. Functionally, component of the F(0) channel, it forms part of the peripheral stalk, linking F(1) to F(0). The chain is ATP synthase subunit b, organellar chromatophore from Paulinella chromatophora.